The chain runs to 937 residues: MPALTLTRLLRIGEGRTVKRLAHLADEVLALGSDYEQLTDAELRAKTDEFKQRYADGETLDDLLLEAFAVAREASWRVLNQKHYKVQVMGGAALHLGNIAEMKTGEGKTLTCVLPAYLNALSGDGVHVVTVNDYLAKRDAEWMGRVHRFLGLEVGVILGGMTPPQRRVAYAADITYGTNNEFGFDYLRDNMAHSLDDLVQRGHNFAVVDEVDSILIDEARTPLIISGPADASSKWYAEFARIAPLLKKDVHYEVDIKKRTIGVHEAGVEFVEDQLGIDNLYEAANSPLVSYLNNAIKAKELYQRDKDYIVRDGEVIIVDEFTGRILVGRRYNEGMHQAIEAKEGVEIQPENQTLATITLQNYFRLYDKLSGMTGTAETEAAELHQIYNLGVVPIPTNKPMIRVDQSDLIYKTEEAKFNAVVDDVAERHEKGQPVLIGTTSVERSEYLSKQFTRRGIPHSVLNAKFHEQEAQIIAEAGRPGAVTVATNMAGRGTDIVLGGNPDIIADILLRKQGLDPVETPEEYEAAWLPTLEQVKAQTAADADAVREAGGLYVLGTERHESRRIDNQLRGRSGRQGDPGESRFYLSLGDELMRRFNGAALEAIMTRLNLPDDVPIEAKMVSKAIKSAQTQVEQQNFEIRKNVLKYDEVMNQQRTVIYGERNRILRGEDMEGQVQNMITDVITAYVDGATAEGYVEDWDLEKLWTALKTLYPVSLDYRELTGELDGEPRDLSREELREALLEDAHSAYAKREQEIDGLAGEGSMRNLERQVLLSVLDRKWREHLYEMDYLKEGIGLRAMAQRDPLVEYQREGFDMFTAMLDGLKEESVGFLFNLQVEVQQPQPTGVSVDPGLRSPVGATVPAPAPAAPTPLLAKGITDQAPRGLNYIGPDEGGRASVHSDAEEYGGGTPAAAGTRRERREAARAEGKGKRGPKSRRKH.

Residues Gln87, 105-109, and Asp494 each bind ATP; that span reads GEGKT. Residues 881–937 form a disordered region; sequence RGLNYIGPDEGGRASVHSDAEEYGGGTPAAAGTRRERREAARAEGKGKRGPKSRRKH. Composition is skewed to basic and acidic residues over residues 890–900 and 913–927; these read EGGRASVHSDA and TRRE…EGKG. A compositionally biased stretch (basic residues) spans 928–937; it reads KRGPKSRRKH.

This sequence belongs to the SecA family. As to quaternary structure, monomer and homodimer. Part of the essential Sec protein translocation apparatus which comprises SecA, SecYEG and auxiliary proteins SecDF. Other proteins may also be involved.

Its subcellular location is the cell membrane. The protein localises to the cytoplasm. It catalyses the reaction ATP + H2O + cellular proteinSide 1 = ADP + phosphate + cellular proteinSide 2.. Part of the Sec protein translocase complex. Interacts with the SecYEG preprotein conducting channel. Has a central role in coupling the hydrolysis of ATP to the transfer of proteins into and across the cell membrane, serving as an ATP-driven molecular motor driving the stepwise translocation of polypeptide chains across the membrane. This chain is Protein translocase subunit SecA, found in Nocardia farcinica (strain IFM 10152).